The primary structure comprises 509 residues: Kelch repeat protein M-T9 (509 aa).

A BTB domain is found at 15–79; sequence SDVTVVAGDS…MYAGCDGLND (65 aa). Kelch repeat units follow at residues 274–320, 321–368, 370–415, 416–463, and 465–509; these read VLYC…IVNG, YIYV…YRNE, WIVG…VYNN, RLYC…VYNK, and IYVL…NDEI.

This sequence belongs to the poxviruses Kelch family.

This chain is Kelch repeat protein M-T9, found in Myxoma virus (strain Lausanne) (MYXV).